The sequence spans 452 residues: Ribosomal protein uS12 methylthiotransferase RimO (452 aa).

One can recognise an MTTase N-terminal domain in the interval 5 to 116; it reads PTIAFSHLGC…IVDVLQRTES (112 aa). [4Fe-4S] cluster contacts are provided by Cys-14, Cys-50, Cys-79, Cys-154, Cys-158, and Cys-161. Residues 140–369 form the Radical SAM core domain; it reads TTTSAVAYLR…MATQQPIAER (230 aa). The region spanning 372-438 is the TRAM domain; that stretch reads RAQIGRLVDV…IYDLHGEVAS (67 aa).

It belongs to the methylthiotransferase family. RimO subfamily. Requires [4Fe-4S] cluster as cofactor.

Its subcellular location is the cytoplasm. It catalyses the reaction L-aspartate(89)-[ribosomal protein uS12]-hydrogen + (sulfur carrier)-SH + AH2 + 2 S-adenosyl-L-methionine = 3-methylsulfanyl-L-aspartate(89)-[ribosomal protein uS12]-hydrogen + (sulfur carrier)-H + 5'-deoxyadenosine + L-methionine + A + S-adenosyl-L-homocysteine + 2 H(+). Its function is as follows. Catalyzes the methylthiolation of an aspartic acid residue of ribosomal protein uS12. This Synechococcus sp. (strain ATCC 27144 / PCC 6301 / SAUG 1402/1) (Anacystis nidulans) protein is Ribosomal protein uS12 methylthiotransferase RimO.